Reading from the N-terminus, the 60-residue chain is Large ribosomal subunit protein eL37 (60 aa).

Residues Cys19, Cys22, Cys34, and Cys37 each contribute to the Zn(2+) site. A C4-type zinc finger spans residues Cys19 to Cys37.

It belongs to the eukaryotic ribosomal protein eL37 family. Zn(2+) serves as cofactor.

Its function is as follows. Binds to the 23S rRNA. In Methanoregula boonei (strain DSM 21154 / JCM 14090 / 6A8), this protein is Large ribosomal subunit protein eL37.